The sequence spans 255 residues: MAADIRIVPCLTDNFGYLIHDPSSGATASIDAPEAAPLIAALEKEGWKLTDILVTHHHGDHVGGIAELKAKYHCRVVAPHDANAKIADADLRVEEGDVVKVGGLEARVLETPGHTLDHISYVFADDRALFAADTLFSIGCGRVFEGTYPMMWESLLKLRALPDDYKLYCGHEYTASNVKFALTIEPENAALQARAKQVEQQRGAGRPTIPVTLGEEKQANVFLRADVPSVAAAIGFAGESAADVFGELRERKNNS.

Residues His-56, His-58, Asp-60, His-61, His-114, Asp-133, and His-171 each contribute to the Zn(2+) site.

It belongs to the metallo-beta-lactamase superfamily. Glyoxalase II family. Monomer. Zn(2+) serves as cofactor.

It carries out the reaction an S-(2-hydroxyacyl)glutathione + H2O = a 2-hydroxy carboxylate + glutathione + H(+). It functions in the pathway secondary metabolite metabolism; methylglyoxal degradation; (R)-lactate from methylglyoxal: step 2/2. Functionally, thiolesterase that catalyzes the hydrolysis of S-D-lactoyl-glutathione to form glutathione and D-lactic acid. This is Hydroxyacylglutathione hydrolase from Rhodopseudomonas palustris (strain HaA2).